The following is a 347-amino-acid chain: Iron-sulfur cluster assembly protein SufC (347 aa).

One can recognise an ABC transporter domain in the interval 100-346 (LEIKDLHAIE…ENKGYSQFLK (247 aa)). 134–141 (GRNGSGKS) is a binding site for ATP.

The protein belongs to the ABC transporter superfamily. Ycf16 family. In terms of assembly, component of a complex composed of SufB, SufC and SufD in a stoichiometric ratio of 1:2:1. Interacts with SufB. Interacts with SufD; the interaction enhances the ATPase activity of SufC. Post-translationally, proteolytically cleaved.

Its subcellular location is the plastid. The protein resides in the apicoplast. It catalyses the reaction ATP + H2O = ADP + phosphate + H(+). It functions in the pathway cofactor biosynthesis; iron-sulfur cluster biosynthesis. Its function is as follows. Participates in the sulfur mobilization (SUF) pathway for iron-sulfur (Fe-S) cluster biogenesis. As part of a complex consisting of SufB-SufC(2)-SufD, involved in assembly of [4Fe-4S] clusters. Exhibits ATPase activity. In Plasmodium falciparum (isolate 3D7), this protein is Iron-sulfur cluster assembly protein SufC.